The following is an 809-amino-acid chain: MTMIFFSKLNRSISRSKGFLYGGGVRSAARLLTSPGLEAASVNEVEGGLGFIRRHFASLASRKGLVNNDLIGVFANPRLRRFFSDEAPKKKNYENYFPKDKQEPKSDQKSEHKEGSEKNENENVGDMFMNRFQNLLIPLLALAVFFSTFSFGSGEQQQISFQEFKNKLLEPGLVDHIDVSNKSVAKVYVRSTPKDQQTTDVVHGNGNGIPAKRTGGQYKYYFNIGSVDSFEEKLEEAQEALGVDRHEYVPVTYVSEMVWYQEFMRFAPTLLLLGTLIYGARRMQGGLGVGGTGGKNGRGIFNIGKATITRADKHSKNKIYFKDVAGCDEAKQEIMEFVHFLKNPKKYEDLGAKIPKGALLVGPPGTGKTLLAKATAGESGVPFLSISGSDFMEMFVGVGPSRVRHLFQEARQAAPSIIFIDEIDAIGRARGRGGLGGNDERESTLNQLLVEMDGFGTTAGVVVLAGTNRPDILDKALLRPGRFDRQITIDKPDIKGRDQIFKIYLKKIKLDHEPSYYSQRLAALTPGFAGADIANVCNEAALIAARHEGATVTMAHFESAIDRVIGGLEKKNRVISKLERRTVAYHESGHAVVGWFLEHAEPLLKVTIVPRGTAALGFAQYVPNENLLMTKEQLFDMTCMTLGGRAAEQVLIGKISTGAQNDLEKVTKMTYAQVAVYGFSDKVGLLSFPPRDDGYDFSKPYSNKTGAIIDEEVRDWVAKAYERTVELVEEHKVKVAEIAELLLEKEVLHQDDLLKILGERPFKSAEVTNYDRFKSGFEETEKDSAATPTVEPVVDDGAPPPFEPQVVPT.

Residues 1–83 (MTMIFFSKLN…FANPRLRRFF (83 aa)) constitute a mitochondrion transit peptide. Basic and acidic residues predominate over residues 93–121 (YENYFPKDKQEPKSDQKSEHKEGSEKNEN). The tract at residues 93–122 (YENYFPKDKQEPKSDQKSEHKEGSEKNENE) is disordered. A helical membrane pass occupies residues 132 to 152 (FQNLLIPLLALAVFFSTFSFG). 362 to 369 (GPPGTGKT) is a binding site for ATP. Residue H586 coordinates Zn(2+). E587 is an active-site residue. Residues H590 and D662 each contribute to the Zn(2+) site. The segment at 776 to 809 (GFEETEKDSAATPTVEPVVDDGAPPPFEPQVVPT) is disordered.

This sequence in the N-terminal section; belongs to the AAA ATPase family. In the C-terminal section; belongs to the peptidase M41 family. Zn(2+) is required as a cofactor.

The protein resides in the mitochondrion inner membrane. In terms of biological role, probable ATP-dependent zinc metallopeptidase. Involved in the assembly and/or stability of the complexes I and V of the mitochondrial oxidative phosphorylation system. In Arabidopsis thaliana (Mouse-ear cress), this protein is ATP-dependent zinc metalloprotease FTSH 3, mitochondrial (FTSH3).